The primary structure comprises 137 residues: Small ribosomal subunit protein uS13 (137 aa).

The segment at 114–137 is disordered; that stretch reads VTQKNARTRKGPRKTIMAKKDKGK. Positions 119–130 are enriched in basic residues; it reads ARTRKGPRKTIM.

It belongs to the universal ribosomal protein uS13 family. In terms of assembly, part of the 30S ribosomal subunit. Forms a loose heterodimer with protein S19. Forms two bridges to the 50S subunit in the 70S ribosome.

In terms of biological role, located at the top of the head of the 30S subunit, it contacts several helices of the 16S rRNA. In the 70S ribosome it contacts the 23S rRNA (bridge B1a) and protein L5 of the 50S subunit (bridge B1b), connecting the 2 subunits; these bridges are implicated in subunit movement. Contacts the tRNAs in the A and P-sites. The polypeptide is Small ribosomal subunit protein uS13 (Mesomycoplasma hyopneumoniae (strain 232) (Mycoplasma hyopneumoniae)).